A 412-amino-acid chain; its full sequence is Orcinol synthase (412 aa).

Residues cysteine 164, histidine 322, and asparagine 355 contribute to the active site.

Belongs to the thiolase-like superfamily. Chalcone/stilbene synthases family. As to quaternary structure, homodimer. Mainly expressed in young leaves, and barely in mature leaves and twigs.

The enzyme catalyses 3 malonyl-CoA + acetyl-CoA + 3 H(+) = orcinol + 4 CO2 + 4 CoA. The catalysed reaction is 3 malonyl-CoA + acetyl-CoA + 2 H(+) = orsellinate + 3 CO2 + 4 CoA. It carries out the reaction 3 malonyl-CoA + acetyl-CoA + 3 H(+) = tetraacetate lactone + 3 CO2 + 4 CoA. It catalyses the reaction 2 malonyl-CoA + acetyl-CoA + 2 H(+) = triacetate lactone + 2 CO2 + 3 CoA. The enzyme catalyses 3 malonyl-CoA + acetyl-CoA + 3 H(+) = 2-acetylphloroglucinol + 3 CO2 + 4 CoA. The protein operates within secondary metabolite biosynthesis; terpenoid biosynthesis. In terms of biological role, involved in the biosynthesis of acetate-derived aromatic tetraketides natural products, precursors of daurichromenic acid, an anti-human immunodeficiency viruses (HIV) meroterpenoid consisting of sesquiterpene and orsellinic acid (OSA) moieties. Accepts acetyl-CoA as starter substrate and produces orcinol as the major reaction product, along with four minor products including OSA, tetraacetate lactone, triacetate lactone and 2-acetylphloroglucinol. The polypeptide is Orcinol synthase (Rhododendron dauricum (Azalea daurica)).